The chain runs to 402 residues: UPF0261 protein BPP1817 (402 aa).

It belongs to the UPF0261 family.

This Bordetella parapertussis (strain 12822 / ATCC BAA-587 / NCTC 13253) protein is UPF0261 protein BPP1817.